A 432-amino-acid chain; its full sequence is UDP-N-acetylmuramate--L-alanine ligase (432 aa).

108–114 (GAHGKTS) is a binding site for ATP.

Belongs to the MurCDEF family.

It is found in the cytoplasm. The enzyme catalyses UDP-N-acetyl-alpha-D-muramate + L-alanine + ATP = UDP-N-acetyl-alpha-D-muramoyl-L-alanine + ADP + phosphate + H(+). It functions in the pathway cell wall biogenesis; peptidoglycan biosynthesis. Cell wall formation. The polypeptide is UDP-N-acetylmuramate--L-alanine ligase (Bacillus licheniformis (strain ATCC 14580 / DSM 13 / JCM 2505 / CCUG 7422 / NBRC 12200 / NCIMB 9375 / NCTC 10341 / NRRL NRS-1264 / Gibson 46)).